Consider the following 1045-residue polypeptide: Putative sodium-coupled neutral amino acid transporter 10 (1045 aa).

10 helical membrane passes run 8 to 28 (LIMN…PFCF), 33 to 53 (ILLG…SCMF), 85 to 105 (SMIG…GDLG), 117 to 137 (VSEG…VLPL), 150 to 170 (FSAM…LSSF), 226 to 246 (IFAL…FFGY), 269 to 289 (MIRV…ILPC), 320 to 340 (ILTL…PNVE), 342 to 362 (ILGL…PALI), and 375 to 395 (FILG…LTVT). Composition is skewed to basic and acidic residues over residues 412 to 453 (KEEK…EEQI), 460 to 479 (PQKE…RPDQ), and 503 to 546 (VDEK…DQAE). 2 disordered regions span residues 412–584 (KEEK…EQPP) and 606–658 (EIAE…AEAG). Positions 564–573 (NDPNKQQLVN) are enriched in polar residues. Positions 627 to 658 (PIKDEKNEQIPGDPGKESHVEPKAEDNQAEAG) are enriched in basic and acidic residues.

It belongs to the amino acid/polyamine transporter 2 family.

The protein resides in the membrane. Functionally, putative sodium-dependent amino acid/proton antiporter. The chain is Putative sodium-coupled neutral amino acid transporter 10 (slc38a10) from Xenopus laevis (African clawed frog).